Here is a 448-residue protein sequence, read N- to C-terminus: Enolase (448 aa).

Gln-164 provides a ligand contact to (2R)-2-phosphoglycerate. Glu-206 acts as the Proton donor in catalysis. Residues Asp-243, Glu-289, and Asp-316 each coordinate Mg(2+). Residues Lys-341, Arg-370, Ser-371, and Lys-392 each contribute to the (2R)-2-phosphoglycerate site. Lys-341 acts as the Proton acceptor in catalysis.

This sequence belongs to the enolase family. Requires Mg(2+) as cofactor.

It localises to the cytoplasm. The protein localises to the secreted. Its subcellular location is the cell surface. The enzyme catalyses (2R)-2-phosphoglycerate = phosphoenolpyruvate + H2O. It participates in carbohydrate degradation; glycolysis; pyruvate from D-glyceraldehyde 3-phosphate: step 4/5. Functionally, catalyzes the reversible conversion of 2-phosphoglycerate (2-PG) into phosphoenolpyruvate (PEP). It is essential for the degradation of carbohydrates via glycolysis. The polypeptide is Enolase (Oenococcus oeni (strain ATCC BAA-331 / PSU-1)).